The chain runs to 392 residues: uncharacterized protein (392 aa).

A mitochondrion-targeting transit peptide spans 1 to 34 (MCISSSSLLCGINSLKYASNRVGILIPPFQTASS). The next 8 membrane-spanning stretches (helical) occupy residues 115–135 (VAIM…WHWD), 150–172 (FRFM…WWTL), 185–205 (LLVN…KFGV), 208–225 (ALSV…VALQ), 277–297 (ATFV…AVYA), 299–319 (AAIF…VYPV), 321–341 (AGIF…LNYE), and 350–370 (AHVS…PAMW). Residue Ser292 is the Nucleophile of the active site. The active site involves His351.

It belongs to the peptidase S54 family.

It localises to the mitochondrion inner membrane. This is an uncharacterized protein from Schizosaccharomyces pombe (strain 972 / ATCC 24843) (Fission yeast).